We begin with the raw amino-acid sequence, 497 residues long: Cobyrinate a,c-diamide synthase (497 aa).

The GATase cobBQ-type domain occupies 273–478 (RIGIALDEAF…AHLHGVAYRE (206 aa)). The Nucleophile role is filled by cysteine 355.

It belongs to the CobB/CbiA family. Mg(2+) serves as cofactor.

It catalyses the reaction cob(II)yrinate + 2 L-glutamine + 2 ATP + 2 H2O = cob(II)yrinate a,c diamide + 2 L-glutamate + 2 ADP + 2 phosphate + 2 H(+). The catalysed reaction is Ni-sirohydrochlorin + 2 L-glutamine + 2 ATP + 2 H2O = Ni-sirohydrochlorin a,c-diamide + 2 L-glutamate + 2 ADP + 2 phosphate + 2 H(+). It functions in the pathway cofactor biosynthesis; adenosylcobalamin biosynthesis; cob(II)yrinate a,c-diamide from sirohydrochlorin (anaerobic route): step 10/10. Catalyzes the ATP-dependent amidation of the two carboxylate groups at positions a and c of cobyrinate, using either L-glutamine or ammonia as the nitrogen source (Potential). Involved in the biosynthesis of the unique nickel-containing tetrapyrrole coenzyme F430, the prosthetic group of methyl-coenzyme M reductase (MCR), which plays a key role in methanogenesis and anaerobic methane oxidation. Catalyzes the ATP-dependent amidation of the two carboxylate groups at positions a and c of Ni-sirohydrochlorin, using L-glutamine or ammonia as the nitrogen source. In Methanosarcina acetivorans (strain ATCC 35395 / DSM 2834 / JCM 12185 / C2A), this protein is Cobyrinate a,c-diamide synthase.